A 737-amino-acid polypeptide reads, in one-letter code: Ribosome-releasing factor 2, mitochondrial (737 aa).

A mitochondrion-targeting transit peptide spans 1 to 29 (MLKYALHSGGMPRNRLLRQLSAYIFRRSY). The region spanning 31-310 (SNIRNIGILA…AVNTYLPAPE (280 aa)) is the tr-type G domain. Residues 40 to 47 (AHIDAGKT), 104 to 108 (DTPGH), and 158 to 161 (NKMD) each bind GTP.

This sequence belongs to the TRAFAC class translation factor GTPase superfamily. Classic translation factor GTPase family. EF-G/EF-2 subfamily.

It localises to the mitochondrion. Functionally, mitochondrial GTPase that mediates the disassembly of ribosomes from messenger RNA at the termination of mitochondrial protein biosynthesis. Not involved in the GTP-dependent ribosomal translocation step during translation elongation. This chain is Ribosome-releasing factor 2, mitochondrial, found in Drosophila persimilis (Fruit fly).